The following is a 92-amino-acid chain: PqqA binding protein (92 aa).

This sequence belongs to the PqqD family. In terms of assembly, monomer. Interacts with PqqE.

It functions in the pathway cofactor biosynthesis; pyrroloquinoline quinone biosynthesis. Its function is as follows. Functions as a PqqA binding protein and presents PqqA to PqqE, in the pyrroloquinoline quinone (PQQ) biosynthetic pathway. The sequence is that of PqqA binding protein from Xanthomonas campestris pv. campestris (strain 8004).